Here is a 953-residue protein sequence, read N- to C-terminus: UvrABC system protein A (953 aa).

33 to 40 (GLSGSGKS) serves as a coordination point for ATP. ABC transporter domains are found at residues 320–599 (WGST…EESI) and 619–949 (GHDN…RYLK). An ATP-binding site is contributed by 652–659 (GVSGSGKS). The segment at 752-778 (CEACQGDGLIKIEMHFLPDVYVKCDIC) adopts a C4-type zinc-finger fold.

Belongs to the ABC transporter superfamily. UvrA family. Forms a heterotetramer with UvrB during the search for lesions.

Its subcellular location is the cytoplasm. The UvrABC repair system catalyzes the recognition and processing of DNA lesions. UvrA is an ATPase and a DNA-binding protein. A damage recognition complex composed of 2 UvrA and 2 UvrB subunits scans DNA for abnormalities. When the presence of a lesion has been verified by UvrB, the UvrA molecules dissociate. The chain is UvrABC system protein A from Rickettsia prowazekii (strain Madrid E).